A 352-amino-acid polypeptide reads, in one-letter code: Quinolinate synthase (352 aa).

Iminosuccinate contacts are provided by His-48 and Ser-69. A [4Fe-4S] cluster-binding site is contributed by Cys-114. Iminosuccinate contacts are provided by residues 140 to 142 (YAN) and Ser-157. Cys-201 is a binding site for [4Fe-4S] cluster. Iminosuccinate-binding positions include 227–229 (HPE) and Thr-244. [4Fe-4S] cluster is bound at residue Cys-298.

This sequence belongs to the quinolinate synthase family. Type 1 subfamily. Requires [4Fe-4S] cluster as cofactor.

The protein localises to the cytoplasm. The catalysed reaction is iminosuccinate + dihydroxyacetone phosphate = quinolinate + phosphate + 2 H2O + H(+). It functions in the pathway cofactor biosynthesis; NAD(+) biosynthesis; quinolinate from iminoaspartate: step 1/1. In terms of biological role, catalyzes the condensation of iminoaspartate with dihydroxyacetone phosphate to form quinolinate. This Pseudomonas entomophila (strain L48) protein is Quinolinate synthase.